The chain runs to 95 residues: Phosphoribosyl-ATP pyrophosphatase (95 aa).

The protein belongs to the PRA-PH family.

The protein localises to the cytoplasm. It catalyses the reaction 1-(5-phospho-beta-D-ribosyl)-ATP + H2O = 1-(5-phospho-beta-D-ribosyl)-5'-AMP + diphosphate + H(+). The protein operates within amino-acid biosynthesis; L-histidine biosynthesis; L-histidine from 5-phospho-alpha-D-ribose 1-diphosphate: step 2/9. The sequence is that of Phosphoribosyl-ATP pyrophosphatase from Methanosphaera stadtmanae (strain ATCC 43021 / DSM 3091 / JCM 11832 / MCB-3).